The primary structure comprises 461 residues: Tip elongation protein 1 (461 aa).

One can recognise a CAP-Gly domain in the interval Gly22–Pro69. Phosphoserine is present on residues Ser82, Ser84, Ser289, Ser294, and Ser305. Residues Thr134–Glu418 are a coiled coil. The span at Lys278–Phe303 shows a compositional bias: polar residues. A disordered region spans residues Lys278–Arg323. Residue Thr367 is modified to Phosphothreonine. Residues Leu417–Trp437 are disordered.

In terms of assembly, monomer. Interacts with tea1 and tea2. Interacts with tea4 in the presence of tea1.

The protein localises to the cytoplasm. The protein resides in the cytoskeleton. Functionally, has a role in stabilizing and targeting the growing tips of the microtubules along the long axis of the cell, directing them to the ends of the cell. Acts as a cargo for tea2. The protein is Tip elongation protein 1 (tip1) of Schizosaccharomyces pombe (strain 972 / ATCC 24843) (Fission yeast).